The sequence spans 1470 residues: Transient receptor potential cation channel subfamily M member 2 (1470 aa).

At 1 to 725 (MDEAALEPTL…GELSVDNPHW (725 aa)) the chain is on the cytoplasmic side. ADP-D-ribose-binding positions include Y267, R274, 305 to 308 (GPGT), and R330. Residues 726 to 738 (KVLLCMIFFPLIY) lie within the membrane without spanning it. Residues 739–808 (TGFLTFRRDE…MSFLKSPQVK (70 aa)) lie on the Cytoplasmic side of the membrane. A helical transmembrane segment spans residues 809–829 (FYWNIASYFGFLWLFAVVLMI). The Extracellular portion of the chain corresponds to 830–836 (DFQTSPS). The helical transmembrane segment at 837-857 (WRELLLYVWLTSLVCEEIRQL) threads the bilayer. Residues E853 and Q856 each contribute to the Ca(2+) site. At 858-876 (YHDFDGSGFRRKAKMYIKD) the chain is on the cytoplasmic side. A helical membrane pass occupies residues 877-897 (LWNILDVLSIVLFIAGLICRL). N879 contacts Ca(2+). Over 898–905 (QASDTVFY) the chain is Extracellular. The helical transmembrane segment at 906–926 (IGKVILCIDFIIFCLRLMAIF) threads the bilayer. At 927 to 941 (SISRTLGPKIIIVRR) the chain is on the cytoplasmic side. Residues 942-968 (MMLDLFFFMFLLSIWVVAYGVAKQGIL) form a helical membrane-spanning segment. Topologically, residues 969–977 (IENEERLNW) are extracellular. An intramembrane region (pore-forming) is located at residues 978-1002 (IIRGAVYEPYITIFGNFPTNIDNTL). The Selectivity filter motif lies at 991–993 (FGN). Over 1003–1034 (FDISSCSVNASDPLKPKCPMLNADNTPVFPEW) the chain is Extracellular. C1008 and C1020 are joined by a disulfide. N-linked (GlcNAc...) asparagine glycosylation is present at N1011. A helical membrane pass occupies residues 1035 to 1059 (LTIMMLCVYLLFANILLLNLLIAIF). The Cytoplasmic portion of the chain corresponds to 1060-1087 (NYTFQEVQDNTDTIWKFQRYELIKEYHS). E1084 provides a ligand contact to Ca(2+). An intramembrane segment occupies 1088 to 1105 (RPALPPPFILLSHLILFI). The Cytoplasmic segment spans residues 1106–1470 (RGVFLRDLPQ…QIAHHHNTYF (365 aa)). The interval 1157–1470 (HRIHDTAEKV…QIAHHHNTYF (314 aa)) is divergent Nudix hydrolase-like domain. 2 disordered regions span residues 1215 to 1256 (KSKV…LQYP) and 1281 to 1314 (PPVY…GKGA). A compositionally biased stretch (acidic residues) spans 1231-1244 (DDGDSSGQETDDEE). Over residues 1283–1295 (VYNQQDSSESDTS) the composition is skewed to polar residues. ADP-D-ribose contacts are provided by D1398 and R1400.

The protein belongs to the transient receptor (TC 1.A.4) family. LTrpC subfamily. TRPM2 sub-subfamily. As to quaternary structure, homotetramer.

It localises to the cell membrane. It carries out the reaction Ca(2+)(in) = Ca(2+)(out). The enzyme catalyses Na(+)(in) = Na(+)(out). Its activity is regulated as follows. Activated by intracellular ADP-ribose. Ca(2+) and PI(4,5)P2 are required for channel opening by ADP-ribose. Functionally, nonselective, voltage-independent cation channel that mediates Ca(2+) influx, leading to increased cytoplasmic Ca(2+) levels. Functions as a ligand-gated ion channel, gated by intracellular adenosine diphosphate ribose (ADP-ribose), Ca(2+), warm temperature, and oxidative stress. Binding of ADP-ribose to the cytoplasmic N-terminal region causes a conformation change; the channel is primed but still requires Ca(2+) binding to trigger channel opening. This chain is Transient receptor potential cation channel subfamily M member 2, found in Danio rerio (Zebrafish).